Reading from the N-terminus, the 486-residue chain is tRNA-2-methylthio-N(6)-dimethylallyladenosine synthase (486 aa).

In terms of domain architecture, MTTase N-terminal spans 35 to 151 (RNLYVESYGC…LPRLLATVDS (117 aa)). [4Fe-4S] cluster-binding residues include cysteine 44, cysteine 80, cysteine 114, cysteine 189, cysteine 193, and cysteine 196. The Radical SAM core domain maps to 175–419 (NSNGVSAFIS…IDKQRQHSFE (245 aa)). Residues 422-485 (LKDIGKVYQV…TGTLLGEICT (64 aa)) enclose the TRAM domain.

It belongs to the methylthiotransferase family. MiaB subfamily. In terms of assembly, monomer. Requires [4Fe-4S] cluster as cofactor.

It is found in the cytoplasm. The enzyme catalyses N(6)-dimethylallyladenosine(37) in tRNA + (sulfur carrier)-SH + AH2 + 2 S-adenosyl-L-methionine = 2-methylsulfanyl-N(6)-dimethylallyladenosine(37) in tRNA + (sulfur carrier)-H + 5'-deoxyadenosine + L-methionine + A + S-adenosyl-L-homocysteine + 2 H(+). Catalyzes the methylthiolation of N6-(dimethylallyl)adenosine (i(6)A), leading to the formation of 2-methylthio-N6-(dimethylallyl)adenosine (ms(2)i(6)A) at position 37 in tRNAs that read codons beginning with uridine. The protein is tRNA-2-methylthio-N(6)-dimethylallyladenosine synthase of Amoebophilus asiaticus (strain 5a2).